A 338-amino-acid chain; its full sequence is Nicotinate-nucleotide--dimethylbenzimidazole phosphoribosyltransferase (338 aa).

E305 acts as the Proton acceptor in catalysis.

This sequence belongs to the CobT family.

It catalyses the reaction 5,6-dimethylbenzimidazole + nicotinate beta-D-ribonucleotide = alpha-ribazole 5'-phosphate + nicotinate + H(+). Its pathway is nucleoside biosynthesis; alpha-ribazole biosynthesis; alpha-ribazole from 5,6-dimethylbenzimidazole: step 1/2. Its function is as follows. Catalyzes the synthesis of alpha-ribazole-5'-phosphate from nicotinate mononucleotide (NAMN) and 5,6-dimethylbenzimidazole (DMB). The polypeptide is Nicotinate-nucleotide--dimethylbenzimidazole phosphoribosyltransferase (Rhizobium etli (strain CIAT 652)).